The sequence spans 182 residues: Isopentenyl-diphosphate Delta-isomerase (182 aa).

The Mn(2+) site is built by H25 and H32. One can recognise a Nudix hydrolase domain in the interval 30 to 164 (LLHLAFSSWL…PWAFSPWMVM (135 aa)). The active site involves C67. Position 69 (H69) interacts with Mn(2+). E87 serves as a coordination point for Mg(2+). Positions 114 and 116 each coordinate Mn(2+). Residue E116 is part of the active site.

It belongs to the IPP isomerase type 1 family. As to quaternary structure, homodimer. The cofactor is Mg(2+). Mn(2+) is required as a cofactor.

It localises to the cytoplasm. It catalyses the reaction isopentenyl diphosphate = dimethylallyl diphosphate. Its pathway is isoprenoid biosynthesis; dimethylallyl diphosphate biosynthesis; dimethylallyl diphosphate from isopentenyl diphosphate: step 1/1. Catalyzes the 1,3-allylic rearrangement of the homoallylic substrate isopentenyl (IPP) to its highly electrophilic allylic isomer, dimethylallyl diphosphate (DMAPP). This is Isopentenyl-diphosphate Delta-isomerase from Escherichia coli (strain ATCC 8739 / DSM 1576 / NBRC 3972 / NCIMB 8545 / WDCM 00012 / Crooks).